The chain runs to 860 residues: Pentatricopeptide repeat-containing protein At1g18900 (860 aa).

8 PPR repeats span residues 363 to 397 (DGHTYTTMVGNLGRAKQFGAINKLLDEMVRDGCQP), 398 to 432 (NTVTYNRLIHSYGRANYLNEAMNVFNQMQEAGCKP), 433 to 467 (DRVTYCTLIDIHAKAGFLDIAMDMYQRMQAGGLSP), 468 to 502 (DTFTYSVIINCLGKAGHLPAAHKLFCEMVDQGCTP), 503 to 537 (NLVTYNIMMDLHAKARNYQNALKLYRDMQNAGFEP), 538 to 572 (DKVTYSIVMEVLGHCGYLEEAEAVFTEMQQKNWIP), 573 to 607 (DEPVYGLLVDLWGKAGNVEKAWQWYQAMLHAGLRP), and 608 to 642 (NVPTCNSLLSTFLRVNKIAEAYELLQNMLALGLRP). The 84-residue stretch at 760–843 (INLHVMSEGT…NSGCFVGSGE (84 aa)) folds into the Smr domain.

This sequence belongs to the PPR family. P subfamily.

The protein is Pentatricopeptide repeat-containing protein At1g18900 of Arabidopsis thaliana (Mouse-ear cress).